The chain runs to 259 residues: Flap endonuclease Xni (259 aa).

Asp-109 contacts Mg(2+). The 91-residue stretch at 165–255 folds into the 5'-3' exonuclease domain; sequence VKPQQLSDYW…FNLQDLRFTA (91 aa). K(+) contacts are provided by Leu-176, Ile-187, and Ile-190. The segment at 189-194 is interaction with DNA; that stretch reads GIGPKA.

It belongs to the Xni family. Mg(2+) serves as cofactor. It depends on K(+) as a cofactor.

In terms of biological role, has flap endonuclease activity. During DNA replication, flap endonucleases cleave the 5'-overhanging flap structure that is generated by displacement synthesis when DNA polymerase encounters the 5'-end of a downstream Okazaki fragment. The protein is Flap endonuclease Xni of Vibrio vulnificus (strain CMCP6).